The chain runs to 358 residues: tRNA pseudouridine synthase D (358 aa).

Aspartate 84 serves as the catalytic Nucleophile. Residues 161-312 enclose the TRUD domain; sequence GTPNYFGPQR…RRSLRLMVAD (152 aa).

The protein belongs to the pseudouridine synthase TruD family.

The enzyme catalyses uridine(13) in tRNA = pseudouridine(13) in tRNA. In terms of biological role, responsible for synthesis of pseudouridine from uracil-13 in transfer RNAs. This chain is tRNA pseudouridine synthase D, found in Nitrosococcus oceani (strain ATCC 19707 / BCRC 17464 / JCM 30415 / NCIMB 11848 / C-107).